A 794-amino-acid chain; its full sequence is EVI5-like protein (794 aa).

Polar residues predominate over residues 1–30 (MASPTLSPDSSSQEALSAPTCSPTSDSENL). 2 disordered regions span residues 1 to 36 (MASP…DELE) and 49 to 75 (EADS…SSSA). A compositionally biased stretch (low complexity) spans 55-75 (MRSMNGSRRNSGSSLVSSSSA). The Rab-GAP TBC domain occupies 115–300 (GIPHHFRAIV…RVFDIFMYEG (186 aa)). Coiled coils occupy residues 358-449 (KKMK…QQEN) and 569-709 (EAQA…LKGP). Phosphoserine is present on Ser685. A disordered region spans residues 766–794 (LERPAKDSEGSSDSDADELAAPYSQGLDN).

May interact with RAB10.

Functions as a GTPase-activating protein (GAP) with a broad specificity. The sequence is that of EVI5-like protein (EVI5L) from Homo sapiens (Human).